Reading from the N-terminus, the 77-residue chain is UPF0349 protein lin2491 (77 aa).

The protein belongs to the UPF0349 family.

The protein is UPF0349 protein lin2491 of Listeria innocua serovar 6a (strain ATCC BAA-680 / CLIP 11262).